The primary structure comprises 822 residues: Serine/threonine-protein phosphatase 4 regulatory subunit 3 (822 aa).

The 100-residue stretch at 1-100 (MTDTRRRVKV…DEIWEKICQV (100 aa)) folds into the WH1 domain. Positions 744–822 (TSQLSASGHP…PLTKKARLGS (79 aa)) are disordered. Low complexity predominate over residues 761-774 (SPGSPESPGSVSKS). A compositionally biased stretch (acidic residues) spans 793–808 (YPDDDEEDDDNDEEEK).

The protein belongs to the SMEK family. As to quaternary structure, serine/threonine-protein phosphatase 4 (PP4) occurs in different assemblies of the catalytic and one or more regulatory subunits.

Functionally, regulatory subunit of serine/threonine-protein phosphatase 4. The chain is Serine/threonine-protein phosphatase 4 regulatory subunit 3 (smek1) from Xenopus laevis (African clawed frog).